A 430-amino-acid polypeptide reads, in one-letter code: Glutamyl-tRNA reductase 1 (430 aa).

Residues 49–52 (TCNR), Ser-109, 114–116 (EGQ), and Gln-120 contribute to the substrate site. Cys-50 functions as the Nucleophile in the catalytic mechanism. 189 to 194 (GAGSMA) is a binding site for NADP(+).

The protein belongs to the glutamyl-tRNA reductase family. Homodimer.

The catalysed reaction is (S)-4-amino-5-oxopentanoate + tRNA(Glu) + NADP(+) = L-glutamyl-tRNA(Glu) + NADPH + H(+). The protein operates within porphyrin-containing compound metabolism; protoporphyrin-IX biosynthesis; 5-aminolevulinate from L-glutamyl-tRNA(Glu): step 1/2. Its function is as follows. Catalyzes the NADPH-dependent reduction of glutamyl-tRNA(Glu) to glutamate 1-semialdehyde (GSA). The chain is Glutamyl-tRNA reductase 1 from Nocardioides sp. (strain ATCC BAA-499 / JS614).